Reading from the N-terminus, the 127-residue chain is MNTPKELRYSKEHEWVRVEGDKVRIGITDFAQSELGDIVFVELPEVGTEITANEPFGSVESVKTVSELYAPISGTIVEVNESLNDNPEYVNESPYEKAWMIVIEPKDLSEVDNLLTAEQYAAMVNEG.

Residues 22-104 (KVRIGITDFA…YEKAWMIVIE (83 aa)) enclose the Lipoyl-binding domain. Lysine 63 carries the post-translational modification N6-lipoyllysine.

This sequence belongs to the GcvH family. As to quaternary structure, the glycine cleavage system is composed of four proteins: P, T, L and H. Requires (R)-lipoate as cofactor.

The glycine cleavage system catalyzes the degradation of glycine. The H protein shuttles the methylamine group of glycine from the P protein to the T protein. Functionally, is also involved in protein lipoylation via its role as an octanoyl/lipoyl carrier protein intermediate. The sequence is that of Glycine cleavage system H protein from Geobacillus thermodenitrificans (strain NG80-2).